The following is a 275-amino-acid chain: Dolichyl-diphosphooligosaccharide--protein glycosyltransferase subunit delta (275 aa).

Positions 1–18 are cleaved as a signal peptide; that stretch reads MKTSVFIAIFNLLVCALA. The next 3 membrane-spanning stretches (helical) occupy residues 179–199, 214–234, and 241–261; these read VFIIAAFTLLLGLFGSWVGFI, VQLLHNVSFLISVLGFELNFV, and SIFTTLFYGFILSIPCVYFGV.

It belongs to the SWP1 family. In terms of assembly, component of the oligosaccharyltransferase (OST) complex.

It localises to the endoplasmic reticulum membrane. The protein operates within protein modification; protein glycosylation. In terms of biological role, subunit of the oligosaccharyl transferase (OST) complex that catalyzes the initial transfer of a defined glycan (Glc(3)Man(9)GlcNAc(2) in eukaryotes) from the lipid carrier dolichol-pyrophosphate to an asparagine residue within an Asn-X-Ser/Thr consensus motif in nascent polypeptide chains, the first step in protein N-glycosylation. N-glycosylation occurs cotranslationally and the complex associates with the Sec61 complex at the channel-forming translocon complex that mediates protein translocation across the endoplasmic reticulum (ER). All subunits are required for a maximal enzyme activity. Plays a role in cell wall integrity and in engulfment by macrophages. This Candida albicans (strain SC5314 / ATCC MYA-2876) (Yeast) protein is Dolichyl-diphosphooligosaccharide--protein glycosyltransferase subunit delta.